Consider the following 147-residue polypeptide: Hemoglobin subunit epsilon (147 aa).

The 145-residue stretch at 3 to 147 (HFTAEEKTAI…VASALAHKYH (145 aa)) folds into the Globin domain. 2 positions are modified to phosphoserine: Ser-14 and Ser-51. Positions 64 and 93 each coordinate heme b.

Belongs to the globin family. As to expression, red blood cells.

Its function is as follows. Hemoglobin epsilon chain is an embryonic-type beta-type chain found in prenatal and neonatal marsupials. The sequence is that of Hemoglobin subunit epsilon (HBE1) from Notamacropus eugenii (Tammar wallaby).